The chain runs to 249 residues: tRNA(Phe) (4-demethylwyosine(37)-C(7)) aminocarboxypropyltransferase (249 aa).

S-adenosyl-L-methionine contacts are provided by residues Ser-80, Arg-87, Glu-127, and 154-155; that span reads DN.

The protein belongs to the class I-like SAM-binding methyltransferase superfamily. TRM5/TYW2 family.

The protein resides in the cytoplasm. It catalyses the reaction 4-demethylwyosine(37) in tRNA(Phe) + S-adenosyl-L-methionine = 4-demethyl-7-[(3S)-3-amino-3-carboxypropyl]wyosine(37) in tRNA(Phe) + S-methyl-5'-thioadenosine + H(+). Its function is as follows. S-adenosyl-L-methionine-dependent transferase that acts as a component of the wyosine derivatives biosynthesis pathway. Catalyzes the transfer of the alpha-amino-alpha-carboxypropyl (acp) group from S-adenosyl-L-methionine to 4-demethylwyosine (imG-14), forming 7-aminocarboxypropyl-demethylwyosine (wybutosine-86) at position 37 of tRNA(Phe). The polypeptide is tRNA(Phe) (4-demethylwyosine(37)-C(7)) aminocarboxypropyltransferase (Methanocaldococcus jannaschii (strain ATCC 43067 / DSM 2661 / JAL-1 / JCM 10045 / NBRC 100440) (Methanococcus jannaschii)).